We begin with the raw amino-acid sequence, 332 residues long: D-galactose/methyl-galactoside binding periplasmic protein MglB (332 aa).

The signal sequence occupies residues 1 to 23; that stretch reads MNKKVLTLSAVMASMLFGAAAHA. The beta-D-galactose site is built by aspartate 37 and asparagine 114. Positions 37 and 114 each coordinate beta-D-glucose. Residues aspartate 157, asparagine 159, aspartate 161, glutamine 163, and glutamine 165 each coordinate Ca(2+). Beta-D-galactose-binding residues include histidine 175, aspartate 177, and arginine 181. Histidine 175, aspartate 177, and arginine 181 together coordinate beta-D-glucose. Ca(2+) is bound at residue glutamate 228. Asparagine 234, aspartate 259, and asparagine 279 together coordinate beta-D-galactose. The beta-D-glucose site is built by asparagine 234, aspartate 259, and asparagine 279.

The protein belongs to the bacterial solute-binding protein 2 family. In terms of assembly, the ABC transporter complex is composed of one ATP-binding protein (MglA), two transmembrane proteins (MglC) and a solute-binding protein (MglB).

The protein localises to the periplasm. Its function is as follows. Part of the ABC transporter complex MglABC involved in galactose/methyl galactoside import. In addition, binds D-galactose and D-glucose and plays a role in the chemotaxis towards these two sugars by interacting with the Trg chemoreceptor. This chain is D-galactose/methyl-galactoside binding periplasmic protein MglB (mglB), found in Escherichia coli O6:H1 (strain CFT073 / ATCC 700928 / UPEC).